The following is a 463-amino-acid chain: NADH-quinone oxidoreductase subunit N (463 aa).

14 consecutive transmembrane segments (helical) span residues 5-25 (LLYGLLPEHILLGLILVLMLL), 34-54 (AGSALFIASLLAGAGVLVMQL), 72-92 (FSEIGRLIIVSCGAILGVYSL), 99-119 (KYWILIASSLLGAMIILDSAG), 120-140 (FISLFMGIEILSLPGFALMVL), 154-174 (YLLLSSVATALVLFGLSLVYG), 196-216 (LAASVMILSGFFLKASVFPFH), 230-250 (VTAFLASIVKAAVVLGLVRIL), 259-279 (AVTVIALLSMLSMFYGNITAI), 286-303 (KMLAYSSISHAGYMMFAL), 314-334 (LLYYVAVYAVTTITACACFSI), 356-376 (AILLSLCVLSLAGIPPLPGFL), 393-413 (VAVLAFVASYIGTFFYLGVVL), and 432-452 (LCWTWGGALLGTLALALFMLL).

Belongs to the complex I subunit 2 family. NDH-1 is composed of 14 different subunits. Subunits NuoA, H, J, K, L, M, N constitute the membrane sector of the complex.

It localises to the cell inner membrane. It catalyses the reaction a quinone + NADH + 5 H(+)(in) = a quinol + NAD(+) + 4 H(+)(out). NDH-1 shuttles electrons from NADH, via FMN and iron-sulfur (Fe-S) centers, to quinones in the respiratory chain. The immediate electron acceptor for the enzyme in this species is believed to be ubiquinone. Couples the redox reaction to proton translocation (for every two electrons transferred, four hydrogen ions are translocated across the cytoplasmic membrane), and thus conserves the redox energy in a proton gradient. The protein is NADH-quinone oxidoreductase subunit N of Pelobacter propionicus (strain DSM 2379 / NBRC 103807 / OttBd1).